The following is a 301-amino-acid chain: Protease HtpX (301 aa).

2 helical membrane-spanning segments follow: residues 4 to 24 (IGLF…ILSL) and 38 to 58 (LGNL…ISLL). Residue H147 coordinates Zn(2+). The active site involves E148. A Zn(2+)-binding site is contributed by H151. 2 helical membrane passes run 155–175 (GDMV…MFFA) and 200–220 (FAIT…IVMW). E226 contributes to the Zn(2+) binding site.

This sequence belongs to the peptidase M48B family. It depends on Zn(2+) as a cofactor.

Its subcellular location is the cell inner membrane. This Acinetobacter baylyi (strain ATCC 33305 / BD413 / ADP1) protein is Protease HtpX.